We begin with the raw amino-acid sequence, 211 residues long: Transcription factor E (211 aa).

Residues 10–130 (GNPAIYQYLL…LWLMRMDHMN (121 aa)) enclose the HTH TFE/IIEalpha-type domain.

Belongs to the TFE family. As to quaternary structure, monomer. Interaction with RNA polymerase subunits RpoF and RpoE is necessary for Tfe stimulatory transcription activity. Able to interact with Tbp and RNA polymerase in the absence of DNA promoter. Interacts both with the preinitiation and elongation complexes.

Its function is as follows. Transcription factor that plays a role in the activation of archaeal genes transcribed by RNA polymerase. Facilitates transcription initiation by enhancing TATA-box recognition by TATA-box-binding protein (Tbp), and transcription factor B (Tfb) and RNA polymerase recruitment. Not absolutely required for transcription in vitro, but particularly important in cases where Tbp or Tfb function is not optimal. It dynamically alters the nucleic acid-binding properties of RNA polymerases by stabilizing the initiation complex and destabilizing elongation complexes. Seems to translocate with the RNA polymerase following initiation and acts by binding to the non template strand of the transcription bubble in elongation complexes. The chain is Transcription factor E from Methanocorpusculum labreanum (strain ATCC 43576 / DSM 4855 / Z).